A 133-amino-acid polypeptide reads, in one-letter code: ATP synthase epsilon chain, chloroplastic (133 aa).

This sequence belongs to the ATPase epsilon chain family. F-type ATPases have 2 components, CF(1) - the catalytic core - and CF(0) - the membrane proton channel. CF(1) has five subunits: alpha(3), beta(3), gamma(1), delta(1), epsilon(1). CF(0) has three main subunits: a, b and c.

The protein localises to the plastid. The protein resides in the chloroplast thylakoid membrane. Functionally, produces ATP from ADP in the presence of a proton gradient across the membrane. The polypeptide is ATP synthase epsilon chain, chloroplastic (Citrus sinensis (Sweet orange)).